A 78-amino-acid polypeptide reads, in one-letter code: Large ribosomal subunit protein bL28 (78 aa).

It belongs to the bacterial ribosomal protein bL28 family.

This chain is Large ribosomal subunit protein bL28, found in Legionella pneumophila (strain Paris).